The following is a 508-amino-acid chain: Phosphoglycerate kinase A (508 aa).

12 residues coordinate (2R)-3-phosphoglycerate: Val-32, Asp-33, Phe-34, Asn-35, Arg-48, Ser-70, His-71, Gly-73, Arg-74, Arg-224, His-260, and Arg-261. Positions 306 and 307 each coordinate ADP. Gly-306 is a binding site for CDP. AMP-binding residues include Ala-307 and Lys-308. Ala-307 contributes to the ATP binding site. Ala-307 contacts Mg(2+). Residue Lys-308 coordinates (2R)-3-phosphoglycerate. Glu-311 provides a ligand contact to CDP. Glu-311 is a binding site for Mg(2+). Residues Lys-312 and Gly-330 each contribute to the ADP site. AMP is bound at residue Lys-312. Lys-312 is a binding site for ATP. Gly-330 serves as a coordination point for CDP. Residues Ala-331 and Ala-403 each coordinate AMP. ATP-binding residues include Ala-331 and Ala-403. ADP-binding residues include Ala-403 and Asn-427. Gly-428 and Phe-433 together coordinate CDP. Phe-433, Glu-434, Glu-466, and Ser-467 together coordinate ADP. Position 434 (Glu-434) interacts with AMP. Positions 434, 466, and 467 each coordinate ATP. Glu-466 provides a ligand contact to Mg(2+).

This sequence belongs to the phosphoglycerate kinase family. Monomer. The cofactor is Mg(2+).

It catalyses the reaction (2R)-3-phosphoglycerate + ATP = (2R)-3-phospho-glyceroyl phosphate + ADP. Its pathway is carbohydrate degradation; glycolysis; pyruvate from D-glyceraldehyde 3-phosphate: step 2/5. The chain is Phosphoglycerate kinase A from Trypanosoma brucei brucei.